The chain runs to 125 residues: Gem-associated protein 7 (125 aa).

The residue at position 1 (methionine 1) is an N-acetylmethionine. The SUZ-C domain occupies 1–29 (MQTPLATPVPVLRLPRGPDGSNRGFAPDG). The segment at 1-52 (MQTPLATPVPVLRLPRGPDGSNRGFAPDGRRAPPKPEVPEPPESRESWEQQA) is disordered. Threonine 3 carries the phosphothreonine modification. The Sm domain maps to 59 to 125 (RYLRSLLAMV…SDIISYTFKP (67 aa)).

This sequence belongs to the gemin-7 family. As to quaternary structure, part of the core SMN complex that contains SMN1, GEMIN2/SIP1, DDX20/GEMIN3, GEMIN4, GEMIN5, GEMIN6, GEMIN7, GEMIN8 and STRAP/UNRIP. Part of the SMN-Sm complex that contains SMN1, GEMIN2/SIP1, DDX20/GEMIN3, GEMIN4, GEMIN5, GEMIN6, GEMIN7, GEMIN8, STRAP/UNRIP and the Sm proteins SNRPB, SNRPD1, SNRPD2, SNRPD3, SNRPE, SNRPF and SNRPG. Interacts with GEMIN6; the interaction is direct. Interacts with STRAP/UNRIP; the interaction is direct. Interacts with GEMIN8; the interaction is direct. Interacts with SNRPB, SNRPD2, SNRPD3 and SNRPE; the interaction is direct.

Its subcellular location is the nucleus. It is found in the nucleoplasm. It localises to the gem. The protein resides in the cytoplasm. Functionally, the SMN complex catalyzes the assembly of small nuclear ribonucleoproteins (snRNPs), the building blocks of the spliceosome, and thereby plays an important role in the splicing of cellular pre-mRNAs. Most spliceosomal snRNPs contain a common set of Sm proteins SNRPB, SNRPD1, SNRPD2, SNRPD3, SNRPE, SNRPF and SNRPG that assemble in a heptameric protein ring on the Sm site of the small nuclear RNA to form the core snRNP (Sm core). In the cytosol, the Sm proteins SNRPD1, SNRPD2, SNRPE, SNRPF and SNRPG are trapped in an inactive 6S pICln-Sm complex by the chaperone CLNS1A that controls the assembly of the core snRNP. To assemble core snRNPs, the SMN complex accepts the trapped 5Sm proteins from CLNS1A forming an intermediate. Binding of snRNA inside 5Sm triggers eviction of the SMN complex, thereby allowing binding of SNRPD3 and SNRPB to complete assembly of the core snRNP. This is Gem-associated protein 7 (GEMIN7) from Bos taurus (Bovine).